The primary structure comprises 199 residues: Dephospho-CoA kinase (199 aa).

In terms of domain architecture, DPCK spans 3-199 (VIGLTGSIGM…AAAKMPRRRS (197 aa)). 11–16 (GMGKST) lines the ATP pocket.

This sequence belongs to the CoaE family.

The protein resides in the cytoplasm. The catalysed reaction is 3'-dephospho-CoA + ATP = ADP + CoA + H(+). It participates in cofactor biosynthesis; coenzyme A biosynthesis; CoA from (R)-pantothenate: step 5/5. Functionally, catalyzes the phosphorylation of the 3'-hydroxyl group of dephosphocoenzyme A to form coenzyme A. This is Dephospho-CoA kinase from Nitrobacter winogradskyi (strain ATCC 25391 / DSM 10237 / CIP 104748 / NCIMB 11846 / Nb-255).